Consider the following 98-residue polypeptide: Protein Vpr (98 aa).

The tract at residues 1 to 42 is homooligomerization; that stretch reads MEQLPEDQGPQREPYNEWTLEILEELKREAVRHFPRDWLHQL. Residues Ser79 and Ser98 each carry the phosphoserine; by host modification.

It belongs to the HIV-1 VPR protein family. Homooligomer, may form homodimer. Interacts with p6-gag region of the Pr55 Gag precursor protein through a (Leu-X-X)4 motif near the C-terminus of the P6gag protein. Interacts with host UNG. May interact with host RAD23A/HHR23A. Interacts with host VPRBP/DCAF1, leading to hijack the CUL4A-RBX1-DDB1-DCAF1/VPRBP complex, mediating ubiquitination of host proteins such as TERT and ZGPAT and arrest of the cell cycle in G2 phase. In terms of processing, phosphorylated on several residues by host. These phosphorylations regulate VPR activity for the nuclear import of the HIV-1 pre-integration complex.

It is found in the virion. The protein resides in the host nucleus. It localises to the host extracellular space. In terms of biological role, during virus replication, may deplete host UNG protein, and incude G2-M cell cycle arrest. Acts by targeting specific host proteins for degradation by the 26S proteasome, through association with the cellular CUL4A-DDB1 E3 ligase complex by direct interaction with host VPRPB/DCAF-1. Cell cycle arrest reportedly occurs within hours of infection and is not blocked by antiviral agents, suggesting that it is initiated by the VPR carried into the virion. Additionally, VPR induces apoptosis in a cell cycle dependent manner suggesting that these two effects are mechanistically linked. Detected in the serum and cerebrospinal fluid of AIDS patient, VPR may also induce cell death to bystander cells. Functionally, during virus entry, plays a role in the transport of the viral pre-integration (PIC) complex to the host nucleus. This function is crucial for viral infection of non-dividing macrophages. May act directly at the nuclear pore complex, by binding nucleoporins phenylalanine-glycine (FG)-repeat regions. In Pan troglodytes (Chimpanzee), this protein is Protein Vpr.